We begin with the raw amino-acid sequence, 315 residues long: Porphobilinogen deaminase (315 aa).

Cysteine 234 is subject to S-(dipyrrolylmethanemethyl)cysteine.

This sequence belongs to the HMBS family. Monomer. It depends on dipyrromethane as a cofactor.

It catalyses the reaction 4 porphobilinogen + H2O = hydroxymethylbilane + 4 NH4(+). The protein operates within porphyrin-containing compound metabolism; protoporphyrin-IX biosynthesis; coproporphyrinogen-III from 5-aminolevulinate: step 2/4. Tetrapolymerization of the monopyrrole PBG into the hydroxymethylbilane pre-uroporphyrinogen in several discrete steps. In Mycolicibacterium paratuberculosis (strain ATCC BAA-968 / K-10) (Mycobacterium paratuberculosis), this protein is Porphobilinogen deaminase.